A 142-amino-acid chain; its full sequence is MNTQDQPVTASLVAEAQRLDFLPTYFGPRLMMRGEALVYAWLRRLCERYNGAYWHYYTLSDGGFYLAPDLAERLEIEVDGNGFRGELSADAAGIVATLFALGQLAAEIAGTDAADALIDRYHFLRGFAAGHPEAAAIYRAID.

Belongs to the antirestriction protein family.

In terms of biological role, could be involved in overcoming restriction barriers during establishment after conjugative transfer. The protein is Antirestriction protein KlcA (klcA) of Escherichia coli.